A 160-amino-acid chain; its full sequence is ATP synthase subunit b (160 aa).

A helical membrane pass occupies residues 15 to 35; it reads LVIVIGLLFWFLRGFLGGILE.

It belongs to the ATPase B chain family. F-type ATPases have 2 components, F(1) - the catalytic core - and F(0) - the membrane proton channel. F(1) has five subunits: alpha(3), beta(3), gamma(1), delta(1), epsilon(1). F(0) has four main subunits: a(1), b(1), b'(1) and c(10-14). The alpha and beta chains form an alternating ring which encloses part of the gamma chain. F(1) is attached to F(0) by a central stalk formed by the gamma and epsilon chains, while a peripheral stalk is formed by the delta, b and b' chains.

It localises to the cellular thylakoid membrane. Its function is as follows. F(1)F(0) ATP synthase produces ATP from ADP in the presence of a proton or sodium gradient. F-type ATPases consist of two structural domains, F(1) containing the extramembraneous catalytic core and F(0) containing the membrane proton channel, linked together by a central stalk and a peripheral stalk. During catalysis, ATP synthesis in the catalytic domain of F(1) is coupled via a rotary mechanism of the central stalk subunits to proton translocation. In terms of biological role, component of the F(0) channel, it forms part of the peripheral stalk, linking F(1) to F(0). This is ATP synthase subunit b from Synechococcus sp. (strain CC9605).